We begin with the raw amino-acid sequence, 458 residues long: Alpha-2C adrenergic receptor (458 aa).

The Extracellular portion of the chain corresponds to 1–51 (MASPALAAALAAAAAEGPNGSDAGEWGSGGGANASGTDWVPPPGQYSAGAV). Residues Asn19 and Asn33 are each glycosylated (N-linked (GlcNAc...) asparagine). Residues 52 to 76 (AGLAAVVGFLIVFTVVGNVLVVIAV) form a helical membrane-spanning segment. At 77–88 (LTSRALRAPQNL) the chain is on the cytoplasmic side. Residues 89–114 (FLVSLASADILVATLVMPFSLANELM) traverse the membrane as a helical segment. Topologically, residues 115–124 (AYWYFGQVWC) are extracellular. Residues Cys124 and Cys202 are joined by a disulfide bond. The chain crosses the membrane as a helical span at residues 125–147 (GVYLALDVLFCTSSIVHLCAISL). The Cytoplasmic portion of the chain corresponds to 148–168 (DRYWSVTQAVEYNLKRTPRRV). The helical transmembrane segment at 169–191 (KATIVAVWLISAVISFPPLVSFY) threads the bilayer. The Extracellular segment spans residues 192–207 (RRPDGAAYPQCGLNDE). A helical membrane pass occupies residues 208–231 (TWYILSSCIGSFFAPCLIMGLVYA). Residues 232-379 (RIYRVAKLRT…QAREKRFTFV (148 aa)) are Cytoplasmic-facing. The tract at residues 245-343 (SEKRGPAGPD…SPGPGGRLSR (99 aa)) is disordered. The span at 291–303 (RRRRRGALRRGGR) shows a compositional bias: basic residues. The chain crosses the membrane as a helical span at residues 380–403 (LAVVMGVFVLCWFPFFFSYSLYGI). At 404 to 416 (CREACQLPEPLFK) the chain is on the extracellular side. The helical transmembrane segment at 417–437 (FFFWIGYCNSSLNPVIYTVFN) threads the bilayer. The Cytoplasmic segment spans residues 438–458 (QDFRRSFKHILFRRRRRGFRQ).

This sequence belongs to the G-protein coupled receptor 1 family. Adrenergic receptor subfamily. ADRA2C sub-subfamily.

The protein localises to the cell membrane. Its function is as follows. Alpha-2 adrenergic receptors mediate the catecholamine-induced inhibition of adenylate cyclase through the action of G proteins. This is Alpha-2C adrenergic receptor (Adra2c) from Mus musculus (Mouse).